A 152-amino-acid chain; its full sequence is Protein SprT-like (152 aa).

The region spanning 6-151 (LQQLVCRISL…SKCLGKLELL (146 aa)) is the SprT-like domain. Histidine 67 lines the Zn(2+) pocket. The active site involves glutamate 68. Histidine 71 provides a ligand contact to Zn(2+).

It belongs to the SprT family. It depends on Zn(2+) as a cofactor.

It is found in the cytoplasm. The protein is Protein SprT-like of Lysinibacillus sphaericus (strain C3-41).